Here is a 995-residue protein sequence, read N- to C-terminus: S1 RNA-binding domain-containing protein 1 (995 aa).

Residues 23 to 81 form a disordered region; sequence SFSELSSASEEDDKEDSAWEPQKKVPRSRKQPPPKESKPKRMPRVKKNAPQISDGSEVV. Residues Lys84 and Lys134 each participate in a glycyl lysine isopeptide (Lys-Gly) (interchain with G-Cter in SUMO2) cross-link. The tract at residues 120–165 is disordered; that stretch reads CAAQPHTVRRTKKLKVEEETSKASNLEGESNSSETPSTSTVWGGTC. Low complexity predominate over residues 146–159; that stretch reads EGESNSSETPSTST. Glycyl lysine isopeptide (Lys-Gly) (interchain with G-Cter in SUMO2) cross-links involve residues Lys166, Lys167, and Lys183. Residue Lys185 forms a Glycyl lysine isopeptide (Lys-Gly) (interchain with G-Cter in SUMO1); alternate linkage. Lys185 participates in a covalent cross-link: Glycyl lysine isopeptide (Lys-Gly) (interchain with G-Cter in SUMO2); alternate. Residues 258–288 adopt a coiled-coil conformation; the sequence is ADSLREVQQTLEELRAVAKKVHSTIQKIKKE. At Ser861 the chain carries Phosphoserine. The region spanning 919-992 is the S1 motif domain; it reads GTVLTGKVEN…PRSRITLDLI (74 aa). Lys955 participates in a covalent cross-link: Glycyl lysine isopeptide (Lys-Gly) (interchain with G-Cter in SUMO2). Ser964 is subject to Phosphoserine.

In Homo sapiens (Human), this protein is S1 RNA-binding domain-containing protein 1 (SRBD1).